The primary structure comprises 324 residues: Cytochrome c biogenesis protein CcsA (324 aa).

The next 8 helical transmembrane spans lie at 15–35, 44–64, 71–91, 98–118, 143–163, 228–248, 255–275, and 289–309; these read FSIV…DEII, GMIA…IYSG, LYES…VPYF, LSTI…SGLL, MILG…LLVL, VISL…VWAN, WNWD…AVYL, and AIVA…VNLL.

This sequence belongs to the CcmF/CycK/Ccl1/NrfE/CcsA family. May interact with Ccs1.

Its subcellular location is the plastid. It is found in the chloroplast thylakoid membrane. Functionally, required during biogenesis of c-type cytochromes (cytochrome c6 and cytochrome f) at the step of heme attachment. The sequence is that of Cytochrome c biogenesis protein CcsA from Daucus carota (Wild carrot).